Consider the following 216-residue polypeptide: Phosphatidylserine decarboxylase proenzyme (216 aa).

Residue serine 185 is the Schiff-base intermediate with substrate; via pyruvic acid of the active site. Position 185 is a pyruvic acid (Ser); by autocatalysis (serine 185).

The protein belongs to the phosphatidylserine decarboxylase family. PSD-A subfamily. Heterodimer of a large membrane-associated beta subunit and a small pyruvoyl-containing alpha subunit. It depends on pyruvate as a cofactor. Post-translationally, is synthesized initially as an inactive proenzyme. Formation of the active enzyme involves a self-maturation process in which the active site pyruvoyl group is generated from an internal serine residue via an autocatalytic post-translational modification. Two non-identical subunits are generated from the proenzyme in this reaction, and the pyruvate is formed at the N-terminus of the alpha chain, which is derived from the carboxyl end of the proenzyme. The post-translation cleavage follows an unusual pathway, termed non-hydrolytic serinolysis, in which the side chain hydroxyl group of the serine supplies its oxygen atom to form the C-terminus of the beta chain, while the remainder of the serine residue undergoes an oxidative deamination to produce ammonia and the pyruvoyl prosthetic group on the alpha chain.

It localises to the cell membrane. It catalyses the reaction a 1,2-diacyl-sn-glycero-3-phospho-L-serine + H(+) = a 1,2-diacyl-sn-glycero-3-phosphoethanolamine + CO2. The protein operates within phospholipid metabolism; phosphatidylethanolamine biosynthesis; phosphatidylethanolamine from CDP-diacylglycerol: step 2/2. Its function is as follows. Catalyzes the formation of phosphatidylethanolamine (PtdEtn) from phosphatidylserine (PtdSer). The chain is Phosphatidylserine decarboxylase proenzyme from Nitrosomonas europaea (strain ATCC 19718 / CIP 103999 / KCTC 2705 / NBRC 14298).